A 252-amino-acid polypeptide reads, in one-letter code: Probable endonuclease 4 (252 aa).

Zn(2+) contacts are provided by His-56, His-96, Glu-129, Asp-162, His-165, His-191, Asp-204, His-206, and Glu-233.

It belongs to the AP endonuclease 2 family. Zn(2+) is required as a cofactor.

The catalysed reaction is Endonucleolytic cleavage to 5'-phosphooligonucleotide end-products.. Endonuclease IV plays a role in DNA repair. It cleaves phosphodiester bonds at apurinic or apyrimidinic (AP) sites, generating a 3'-hydroxyl group and a 5'-terminal sugar phosphate. The polypeptide is Probable endonuclease 4 (Mycobacterium marinum (strain ATCC BAA-535 / M)).